The chain runs to 967 residues: Probable helicase DDB_G0274399 (967 aa).

Residues 161–192 are disordered; that stretch reads EMTDDEDTAPTSAATHVGAPTKSTTTTTTTTT. 357 to 364 is a binding site for ATP; sequence GPPGTGKT. Disordered stretches follow at residues 529–553 and 892–967; these read SAIP…QDTS and QKQK…RTRR. Residues 890 to 949 are a coiled coil; that stretch reads NLQKQKDIEKRKKQHKRQKQKSKENDKKKQLKKRKELNNNDNNNNNKESSNKEVQEITNA. Over residues 900–909 the composition is skewed to basic residues; sequence RKKQHKRQKQ. Low complexity predominate over residues 928 to 937; that stretch reads NNDNNNNNKE.

It belongs to the DNA2/NAM7 helicase family.

Its subcellular location is the nucleus. The protein is Probable helicase DDB_G0274399 of Dictyostelium discoideum (Social amoeba).